Consider the following 1079-residue polypeptide: Psi-producing oxygenase A (1079 aa).

Residues Thr105–Val446 form a linoleate 8R-lipoxygenase region. His202 contributes to the heme b binding site. Tyr374 is a catalytic residue. A heme b-binding site is contributed by His377. Residues Gln654–Glu1079 form a 9,12-octadecadienoate 8-hydroperoxide 8R-isomerase region.

This sequence belongs to the peroxidase family. In terms of assembly, homotetramer. The cofactor is heme b.

It catalyses the reaction (9Z,12Z)-octadecadienoate + O2 = (8R,9Z,12Z)-8-hydroperoxyoctadeca-9,12-dienoate. The catalysed reaction is (8R,9Z,12Z)-8-hydroperoxyoctadeca-9,12-dienoate = (5S,8R,9Z,12Z)-5,8-dihydroxyoctadeca-9,12-dienoate. Bifunctional heme-containing enzyme that oxidizes linoleic acid to (8R,9Z,12Z)-8-hydroperoxyoctadeca-9,12-dienoate (within the N-terminal heme peroxidase domain), which is subsequently isomerized to (5S,8R,9Z,12Z)-5,8-dihydroxyoctadeca-9,12-dienoate (within the C-terminal P450 heme thiolate domain). Oxidized unsaturated fatty acids, so-called oxylipins, derived from endogenous fatty acids, influence the development of the asexual conidiophores and sexual cleistothecia and regulate the secondary metabolism. These substances were collectively named psi factors and are primarily a mixture of hydroxylated oleic, linoleic and alpha-linolenic acids. They are termed psi-beta, psi-alpha, and psi-gamma, respectively. Oxylipins may also serve as activators of mammalian immune responses contributing to enhanced resistance to opportunistic fungi and as factors that modulate fungal development contributing to resistance to host defenses. This is Psi-producing oxygenase A (ppoA) from Aspergillus fumigatus (strain CBS 144.89 / FGSC A1163 / CEA10) (Neosartorya fumigata).